We begin with the raw amino-acid sequence, 263 residues long: 3-deoxy-manno-octulosonate cytidylyltransferase (263 aa).

This sequence belongs to the KdsB family.

The protein resides in the cytoplasm. It carries out the reaction 3-deoxy-alpha-D-manno-oct-2-ulosonate + CTP = CMP-3-deoxy-beta-D-manno-octulosonate + diphosphate. The protein operates within nucleotide-sugar biosynthesis; CMP-3-deoxy-D-manno-octulosonate biosynthesis; CMP-3-deoxy-D-manno-octulosonate from 3-deoxy-D-manno-octulosonate and CTP: step 1/1. Its pathway is bacterial outer membrane biogenesis; lipopolysaccharide biosynthesis. Functionally, activates KDO (a required 8-carbon sugar) for incorporation into bacterial lipopolysaccharide in Gram-negative bacteria. The protein is 3-deoxy-manno-octulosonate cytidylyltransferase of Burkholderia cenocepacia (strain HI2424).